Consider the following 465-residue polypeptide: tRNA (guanine(37)-N(1))-methyltransferase (465 aa).

S-adenosyl-L-methionine is bound by residues His189, Asp227 to Leu228, and Asp255 to Ala256. Residues Tyr283–Trp362 are disordered. A compositionally biased stretch (polar residues) spans Asn291 to Thr320. Basic residues predominate over residues Thr343–Arg352. S-adenosyl-L-methionine is bound at residue Asn371.

This sequence belongs to the class I-like SAM-binding methyltransferase superfamily. TRM5/TYW2 family. Monomer.

The protein localises to the mitochondrion matrix. It localises to the nucleus. Its subcellular location is the cytoplasm. The enzyme catalyses guanosine(37) in tRNA + S-adenosyl-L-methionine = N(1)-methylguanosine(37) in tRNA + S-adenosyl-L-homocysteine + H(+). In terms of biological role, specifically methylates the N1 position of guanosine-37 in various cytoplasmic and mitochondrial tRNAs. Methylation is not dependent on the nature of the nucleoside 5' of the target nucleoside. This is the first step in the biosynthesis of wybutosine (yW), a modified base adjacent to the anticodon of tRNAs and required for accurate decoding. In Sorghum bicolor (Sorghum), this protein is tRNA (guanine(37)-N(1))-methyltransferase.